The sequence spans 24 residues: GIFSNMYXRTPAGYFRGPXGYXXN.

The protein belongs to the DEFL family. Group IV subfamily. Distributed in the epidermal cell layer of leaves and in the subepidermal layer region of stems. Not in roots.

Its subcellular location is the secreted. It is found in the cell wall. Its function is as follows. Antimicrobial peptide. Active against Fusarium spp., Gram-positive and Gram-negative bacterial pathogens. The sequence is that of Defensin D6 from Spinacia oleracea (Spinach).